Reading from the N-terminus, the 398-residue chain is 1-deoxy-D-xylulose 5-phosphate reductoisomerase (398 aa).

Residues Thr28, Gly29, Ser30, Ile31, Gly54, Asn57, and Asn135 each coordinate NADPH. Residue Lys136 coordinates 1-deoxy-D-xylulose 5-phosphate. NADPH is bound at residue Glu137. Asp159 is a Mn(2+) binding site. Residues Ser160, Glu161, Ser185, and His208 each coordinate 1-deoxy-D-xylulose 5-phosphate. Glu161 contributes to the Mn(2+) binding site. Residue Gly214 coordinates NADPH. 1-deoxy-D-xylulose 5-phosphate-binding residues include Ser221, Asn226, Lys227, and Glu230. Residue Glu230 coordinates Mn(2+).

It belongs to the DXR family. Mg(2+) is required as a cofactor. Mn(2+) serves as cofactor.

The enzyme catalyses 2-C-methyl-D-erythritol 4-phosphate + NADP(+) = 1-deoxy-D-xylulose 5-phosphate + NADPH + H(+). Its pathway is isoprenoid biosynthesis; isopentenyl diphosphate biosynthesis via DXP pathway; isopentenyl diphosphate from 1-deoxy-D-xylulose 5-phosphate: step 1/6. Catalyzes the NADPH-dependent rearrangement and reduction of 1-deoxy-D-xylulose-5-phosphate (DXP) to 2-C-methyl-D-erythritol 4-phosphate (MEP). In Rhodococcus jostii (strain RHA1), this protein is 1-deoxy-D-xylulose 5-phosphate reductoisomerase.